Reading from the N-terminus, the 327-residue chain is Serum response factor homolog (327 aa).

The interval 12-43 is disordered; sequence QKLQNASPALPEGTSSTPTPSSSTGLLPNGKK. Residues 25–35 show a composition bias toward low complexity; the sequence is TSSTPTPSSST. The MADS-box domain occupies 45-105; the sequence is KGRVKIKMEY…GHVYTYATPK (61 aa). The disordered stretch occupies residues 189–225; that stretch reads TFGEDDYNNDESGDDSDSEEASSDIKEEYQGSPTMVK. Acidic residues predominate over residues 191 to 210; sequence GEDDYNNDESGDDSDSEEAS.

As to expression, expressed in muscle, varying with age, decreasing twofold during the first week of adulthood.

It localises to the nucleus. Functionally, transcription factor. Regulates myogenesis, in cooperation with transcription factors hlh-1 and hnd-1. Required for maintenance of muscle in adulthood. This is Serum response factor homolog from Caenorhabditis elegans.